A 659-amino-acid chain; its full sequence is Pentatricopeptide repeat-containing protein At3g48810 (659 aa).

16 PPR repeats span residues 75–109 (TPLT…GFHC), 110–144 (SEDL…GCDP), 145–179 (SVKI…GFEP), 180–214 (NVFT…GCCP), 215–243 (DAVS…ERFE), 245–279 (VVSV…GISP), 280–314 (NVIS…GCHP), 315–350 (NIYT…GLQP), 351–385 (NVVA…GCSP), 386–420 (NIRT…GCCP), 421–455 (NVVV…NCAP), 456–490 (SVPT…HRCP), 492–526 (NIVT…GVEW), 527–561 (SSST…GKSP), 562–598 (DEIT…KWRP), and 599–633 (DVIS…GIVP).

The protein belongs to the PPR family. P subfamily.

This Arabidopsis thaliana (Mouse-ear cress) protein is Pentatricopeptide repeat-containing protein At3g48810.